The following is a 229-amino-acid chain: Sugar fermentation stimulation protein homolog (229 aa).

Belongs to the SfsA family.

The sequence is that of Sugar fermentation stimulation protein homolog from Caldanaerobacter subterraneus subsp. tengcongensis (strain DSM 15242 / JCM 11007 / NBRC 100824 / MB4) (Thermoanaerobacter tengcongensis).